Reading from the N-terminus, the 151-residue chain is SsrA-binding protein (151 aa).

It belongs to the SmpB family.

Its subcellular location is the cytoplasm. Functionally, required for rescue of stalled ribosomes mediated by trans-translation. Binds to transfer-messenger RNA (tmRNA), required for stable association of tmRNA with ribosomes. tmRNA and SmpB together mimic tRNA shape, replacing the anticodon stem-loop with SmpB. tmRNA is encoded by the ssrA gene; the 2 termini fold to resemble tRNA(Ala) and it encodes a 'tag peptide', a short internal open reading frame. During trans-translation Ala-aminoacylated tmRNA acts like a tRNA, entering the A-site of stalled ribosomes, displacing the stalled mRNA. The ribosome then switches to translate the ORF on the tmRNA; the nascent peptide is terminated with the 'tag peptide' encoded by the tmRNA and targeted for degradation. The ribosome is freed to recommence translation, which seems to be the essential function of trans-translation. The sequence is that of SsrA-binding protein from Chlamydia muridarum (strain MoPn / Nigg).